Consider the following 308-residue polypeptide: Putative ankyrin repeat protein R835 (308 aa).

ANK repeat units follow at residues 100–129 (DINE…NIDL), 152–181 (PMNK…YVDF), 190–217 (SEYT…GANY), 218–247 (KSSY…DLEK), 249–277 (GLRS…EIDY), and 279–305 (YYIY…SKQI).

This chain is Putative ankyrin repeat protein R835, found in Acanthamoeba polyphaga (Amoeba).